We begin with the raw amino-acid sequence, 367 residues long: Aminomethyltransferase (367 aa).

It belongs to the GcvT family. The glycine cleavage system is composed of four proteins: P, T, L and H.

It carries out the reaction N(6)-[(R)-S(8)-aminomethyldihydrolipoyl]-L-lysyl-[protein] + (6S)-5,6,7,8-tetrahydrofolate = N(6)-[(R)-dihydrolipoyl]-L-lysyl-[protein] + (6R)-5,10-methylene-5,6,7,8-tetrahydrofolate + NH4(+). Functionally, the glycine cleavage system catalyzes the degradation of glycine. The polypeptide is Aminomethyltransferase (Mycobacterium leprae (strain Br4923)).